Here is a 1113-residue protein sequence, read N- to C-terminus: MPKRSDINHVLVIGSGPIVIGQACEFDYSGTQACRVLKEEGLRVTLINSNPATIMTDPEMADHTYVEPIEPEYIDKIFAKEIEQGHPIDAVLATLGGQTALNAAIQLDRLGILEKYGVELIGADIDAIERGEDRQKFKDIVTTIGGESARSRVCHNMEEVHETVAELGLPVVVRPSFTMGGLGSGLAYNTEDLERIAGGGLAASPEANVLIEESILGWKEFELELMRDTADNVVVICSIENVDALGVHTGDSVTVAPALTLTDREFQKMRDQGIAIIREVGVDTGGCNIQFAINPVDGRIITIEMNPRVSRSSALASKATGFPIAKMAAKLAIGYTLDEITNDITGETPAAFEPTIDYVVVKAPRFAFEKFVGADDTLTTTMKSVGEVMSLGRNYIAALNKALRSLETKQQGFWTKPDEFFAGERATDKAAVLEDLKRPTEGRLYDVELAMRLGASVEELYEASSIDPWFLAELEALVQFRQKLVDAPFLNEDLLREAKFMGLSDLQIAALRPEFAGEDGVRTLRLSLGIRPVFKTVDTCAAEFEAKTPYHYSAYELDPAAESEVAPQTEREKVLILGSGPNRIGQGIEFDYSCVHAALELSRVGYETVMVNCNPETVSTDYDTADRLYFEPLTFEDVMEVYHAEAQSGTVAGVIVQLGGQTPLGLADRLKKAGVPVIGTSPEAIDMAEDRGEFGALLNREQLPAPAFGTATSFEEARTVADEISYPVLVRPSYVLGGRGMEIVYDEASLEDYINRATELSSDHPVLVDRFLDNAIEIDVDALCDGDEVYLAGVMEHIEEAGIHSGDSACALPPMTLGAQDIEKVREATKKLALGIGVQGLMNVQYALKDDILYVIEANPRASRTVPFVSKATGVNLAKAASRIAVGATIKDLQDEGMIPTEYDGGSLPLDAPIAVKEAVLPFNRFRRPDGKTLDTLLSPEMKSTGEVMGLANNFGAAYAKAEAGAFGALPTEGTVFVTVANRDKRTLILPIQRLALMGYKILATEGTAGMLRRNGIECEVVLKASDIREGVEGKSIVDRIREGEVDLILNTPAGSAGARHDGYDIRAAAVTVGVPLITTVQGVTAAVQGIEALREGVVSVRALQELDHAVKA.

Positions 1-407 (MPKRSDINHV…ALNKALRSLE (407 aa)) are carboxyphosphate synthetic domain. Residues Arg-134, Arg-174, Gly-180, Gly-181, Glu-213, Ile-215, Glu-220, Gly-246, Val-247, His-248, Gln-290, and Glu-304 each coordinate ATP. An ATP-grasp 1 domain is found at 138–333 (KDIVTTIGGE…IAKMAAKLAI (196 aa)). Mg(2+) contacts are provided by Gln-290, Glu-304, and Asn-306. Gln-290, Glu-304, and Asn-306 together coordinate Mn(2+). Residues 408 to 565 (TKQQGFWTKP…ELDPAAESEV (158 aa)) are oligomerization domain. Positions 566 to 967 (APQTEREKVL…AYAKAEAGAF (402 aa)) are carbamoyl phosphate synthetic domain. Positions 695–886 (GALLNREQLP…LAKAASRIAV (192 aa)) constitute an ATP-grasp 2 domain. Arg-731, Arg-770, Leu-772, Glu-777, Gly-802, Ile-803, His-804, Ser-805, Gln-845, and Glu-857 together coordinate ATP. Mg(2+)-binding residues include Gln-845, Glu-857, and Asn-859. Mn(2+)-binding residues include Gln-845, Glu-857, and Asn-859. The MGS-like domain maps to 968-1113 (GALPTEGTVF…LQELDHAVKA (146 aa)). The tract at residues 968-1113 (GALPTEGTVF…LQELDHAVKA (146 aa)) is allosteric domain.

Belongs to the CarB family. As to quaternary structure, composed of two chains; the small (or glutamine) chain promotes the hydrolysis of glutamine to ammonia, which is used by the large (or ammonia) chain to synthesize carbamoyl phosphate. Tetramer of heterodimers (alpha,beta)4. Requires Mg(2+) as cofactor. It depends on Mn(2+) as a cofactor.

It catalyses the reaction hydrogencarbonate + L-glutamine + 2 ATP + H2O = carbamoyl phosphate + L-glutamate + 2 ADP + phosphate + 2 H(+). The catalysed reaction is hydrogencarbonate + NH4(+) + 2 ATP = carbamoyl phosphate + 2 ADP + phosphate + 2 H(+). It functions in the pathway amino-acid biosynthesis; L-arginine biosynthesis; carbamoyl phosphate from bicarbonate: step 1/1. Its pathway is pyrimidine metabolism; UMP biosynthesis via de novo pathway; (S)-dihydroorotate from bicarbonate: step 1/3. Its function is as follows. Large subunit of the glutamine-dependent carbamoyl phosphate synthetase (CPSase). CPSase catalyzes the formation of carbamoyl phosphate from the ammonia moiety of glutamine, carbonate, and phosphate donated by ATP, constituting the first step of 2 biosynthetic pathways, one leading to arginine and/or urea and the other to pyrimidine nucleotides. The large subunit (synthetase) binds the substrates ammonia (free or transferred from glutamine from the small subunit), hydrogencarbonate and ATP and carries out an ATP-coupled ligase reaction, activating hydrogencarbonate by forming carboxy phosphate which reacts with ammonia to form carbamoyl phosphate. The polypeptide is Carbamoyl phosphate synthase large chain (Corynebacterium glutamicum (strain ATCC 13032 / DSM 20300 / JCM 1318 / BCRC 11384 / CCUG 27702 / LMG 3730 / NBRC 12168 / NCIMB 10025 / NRRL B-2784 / 534)).